Consider the following 547-residue polypeptide: Glucose-6-phosphate isomerase (547 aa).

Glu-355 acts as the Proton donor in catalysis. Residues His-386 and Lys-512 contribute to the active site.

The protein belongs to the GPI family.

Its subcellular location is the cytoplasm. The catalysed reaction is alpha-D-glucose 6-phosphate = beta-D-fructose 6-phosphate. Its pathway is carbohydrate biosynthesis; gluconeogenesis. It participates in carbohydrate degradation; glycolysis; D-glyceraldehyde 3-phosphate and glycerone phosphate from D-glucose: step 2/4. In terms of biological role, catalyzes the reversible isomerization of glucose-6-phosphate to fructose-6-phosphate. This Corynebacterium diphtheriae (strain ATCC 700971 / NCTC 13129 / Biotype gravis) protein is Glucose-6-phosphate isomerase.